The primary structure comprises 148 residues: Large ribosomal subunit protein bL9 (148 aa).

The protein belongs to the bacterial ribosomal protein bL9 family.

Its function is as follows. Binds to the 23S rRNA. The protein is Large ribosomal subunit protein bL9 of Ruminiclostridium cellulolyticum (strain ATCC 35319 / DSM 5812 / JCM 6584 / H10) (Clostridium cellulolyticum).